The following is a 289-amino-acid chain: Glycine--tRNA ligase alpha subunit (289 aa).

It belongs to the class-II aminoacyl-tRNA synthetase family. Tetramer of two alpha and two beta subunits.

It localises to the cytoplasm. It catalyses the reaction tRNA(Gly) + glycine + ATP = glycyl-tRNA(Gly) + AMP + diphosphate. This chain is Glycine--tRNA ligase alpha subunit, found in Rickettsia akari (strain Hartford).